The following is a 698-amino-acid chain: Elongation factor G (698 aa).

The 283-residue stretch at 8-290 (ERYRNIGIAA…AVIEFLPAPN (283 aa)) folds into the tr-type G domain. GTP is bound by residues 17–24 (AHIDAGKT), 88–92 (DTPGH), and 142–145 (NKMD).

The protein belongs to the TRAFAC class translation factor GTPase superfamily. Classic translation factor GTPase family. EF-G/EF-2 subfamily.

Its subcellular location is the cytoplasm. In terms of biological role, catalyzes the GTP-dependent ribosomal translocation step during translation elongation. During this step, the ribosome changes from the pre-translocational (PRE) to the post-translocational (POST) state as the newly formed A-site-bound peptidyl-tRNA and P-site-bound deacylated tRNA move to the P and E sites, respectively. Catalyzes the coordinated movement of the two tRNA molecules, the mRNA and conformational changes in the ribosome. This is Elongation factor G from Halorhodospira halophila (strain DSM 244 / SL1) (Ectothiorhodospira halophila (strain DSM 244 / SL1)).